The chain runs to 424 residues: UDP-N-acetylglucosamine 1-carboxyvinyltransferase (424 aa).

22-23 (KN) lines the phosphoenolpyruvate pocket. Arg93 serves as a coordination point for UDP-N-acetyl-alpha-D-glucosamine. The active-site Proton donor is Cys117. Residue Cys117 is modified to 2-(S-cysteinyl)pyruvic acid O-phosphothioketal. UDP-N-acetyl-alpha-D-glucosamine contacts are provided by residues 162–165 (KVSV), Asp307, and Ile329.

Belongs to the EPSP synthase family. MurA subfamily.

Its subcellular location is the cytoplasm. It carries out the reaction phosphoenolpyruvate + UDP-N-acetyl-alpha-D-glucosamine = UDP-N-acetyl-3-O-(1-carboxyvinyl)-alpha-D-glucosamine + phosphate. It functions in the pathway cell wall biogenesis; peptidoglycan biosynthesis. Functionally, cell wall formation. Adds enolpyruvyl to UDP-N-acetylglucosamine. This is UDP-N-acetylglucosamine 1-carboxyvinyltransferase from Actinobacillus pleuropneumoniae serotype 3 (strain JL03).